Consider the following 551-residue polypeptide: Probable 4-coumarate--CoA ligase 1 (551 aa).

ATP contacts are provided by Ser-205, Ser-206, Gly-207, Thr-208, Thr-209, and Lys-213. Tyr-253 is a (E)-4-coumaroyl-AMP binding site. Lys-274 is a CoA binding site. Positions 276–346 are SBD1; that stretch reads EPVRFLELIQ…RFKGRLVIKQ (71 aa). 4 residues coordinate (E)-4-coumaroyl-AMP: Ala-323, Gln-346, Gly-347, and Thr-351. Residues Gln-346, Gly-347, Thr-351, Asp-430, and Arg-445 each coordinate ATP. Residues 347–409 form an SBD2 region; the sequence is GYGATELSPA…IKGPNVMLGY (63 aa). (E)-4-coumaroyl-AMP-binding residues include Lys-447 and Lys-451. The CoA site is built by Lys-453 and Gly-454. Lys-537 is an ATP binding site.

This sequence belongs to the ATP-dependent AMP-binding enzyme family. Requires Mg(2+) as cofactor.

The catalysed reaction is (E)-4-coumarate + ATP + CoA = (E)-4-coumaroyl-CoA + AMP + diphosphate. It catalyses the reaction (E)-4-coumarate + ATP + H(+) = (E)-4-coumaroyl-AMP + diphosphate. It carries out the reaction (E)-4-coumaroyl-AMP + CoA = (E)-4-coumaroyl-CoA + AMP + H(+). It functions in the pathway phytoalexin biosynthesis; 3,4',5-trihydroxystilbene biosynthesis; 3,4',5-trihydroxystilbene from trans-4-coumarate: step 1/2. In terms of biological role, carboxylate--CoA ligase that may use 4-coumarate as substrate. Follows a two-step reaction mechanism, wherein the carboxylate substrate first undergoes adenylation by ATP, followed by a thioesterification in the presence of CoA to yield the final CoA thioester. In Dictyostelium discoideum (Social amoeba), this protein is Probable 4-coumarate--CoA ligase 1 (4cl1).